A 284-amino-acid chain; its full sequence is 4-diphosphocytidyl-2-C-methyl-D-erythritol kinase (284 aa).

Residue K14 is part of the active site. Position 98–108 (98–108) interacts with ATP; it reads PMGGGLGGGSS. The active site involves D140.

This sequence belongs to the GHMP kinase family. IspE subfamily.

The catalysed reaction is 4-CDP-2-C-methyl-D-erythritol + ATP = 4-CDP-2-C-methyl-D-erythritol 2-phosphate + ADP + H(+). Its pathway is isoprenoid biosynthesis; isopentenyl diphosphate biosynthesis via DXP pathway; isopentenyl diphosphate from 1-deoxy-D-xylulose 5-phosphate: step 3/6. Catalyzes the phosphorylation of the position 2 hydroxy group of 4-diphosphocytidyl-2C-methyl-D-erythritol. In Shewanella oneidensis (strain ATCC 700550 / JCM 31522 / CIP 106686 / LMG 19005 / NCIMB 14063 / MR-1), this protein is 4-diphosphocytidyl-2-C-methyl-D-erythritol kinase.